Consider the following 916-residue polypeptide: Isoleucine--tRNA ligase (916 aa).

The 'HIGH' region motif lies at 58-68 (PYANGHLHIGH). E568 contributes to the L-isoleucyl-5'-AMP binding site. A 'KMSKS' region motif is present at residues 609 to 613 (KMSKS). Position 612 (K612) interacts with ATP. Residues C891, C894, C906, and C909 each coordinate Zn(2+).

This sequence belongs to the class-I aminoacyl-tRNA synthetase family. IleS type 1 subfamily. Monomer. Requires Zn(2+) as cofactor.

It is found in the cytoplasm. The catalysed reaction is tRNA(Ile) + L-isoleucine + ATP = L-isoleucyl-tRNA(Ile) + AMP + diphosphate. Catalyzes the attachment of isoleucine to tRNA(Ile). As IleRS can inadvertently accommodate and process structurally similar amino acids such as valine, to avoid such errors it has two additional distinct tRNA(Ile)-dependent editing activities. One activity is designated as 'pretransfer' editing and involves the hydrolysis of activated Val-AMP. The other activity is designated 'posttransfer' editing and involves deacylation of mischarged Val-tRNA(Ile). This Campylobacter fetus subsp. fetus (strain 82-40) protein is Isoleucine--tRNA ligase.